We begin with the raw amino-acid sequence, 353 residues long: Outer membrane protein P5 (353 aa).

The signal sequence occupies residues 1 to 21 (MKKTAIALVVAGLAAASVAQA). The next 8 beta stranded transmembrane spans lie at 27-37 (TFYAGVKAGQA), 58-69 (SFTYGVFGGYQI), 77-85 (LAVELGYDD), 104-115 (HGTHLSLKGSYE), 120-128 (LDVYGKAGV), 158-167 (GLFAVGAEYA), 172-179 (LAVRLEYQ), and 205-213 (SINAGISYR). The region spanning 227 to 353 (VVSKTFSLNS…RVEIAVNGTK (127 aa)) is the OmpA-like domain. The cysteines at positions 326 and 338 are disulfide-linked.

The protein belongs to the outer membrane OOP (TC 1.B.6) superfamily. OmpA family. As to quaternary structure, monomer and homodimer.

It is found in the cell outer membrane. Functionally, with TolR probably plays a role in maintaining the position of the peptidoglycan cell wall in the periplasm. Acts as a porin with low permeability that allows slow penetration of small solutes; an internal gate slows down solute passage. Its function is as follows. Reconstitution in planar bilayers with lithium dodecyl sulfate-solublized P5 yields narrow pores (58 pS conductance) with a low probability of opening, whereas n-octyl-bD-glucopyranoside-solubilized P5 forms large pores (1.1 nS conductance) with high open probability. The large pore easily converts to the smaller pore at room temperature; at 42 degrees Celsius the smaller pore converts to the larger one. The chain is Outer membrane protein P5 from Haemophilus influenzae (strain ATCC 51907 / DSM 11121 / KW20 / Rd).